The primary structure comprises 578 residues: Forkhead box protein P1 (578 aa).

A C2H2-type zinc finger spans residues 208–233; that stretch reads GVCKWPGCETICEDFPSFLKHLNSEH. Residues 250-271 are leucine-zipper; the sequence is VQQLELQLSKDKERLQAMMSHL. A ctbp1-binding region spans residues 284-288; that stretch reads PLNLV. The segment covering 293–305 has biased composition (polar residues); that stretch reads LSKTASEASPQSL. Residues 293 to 325 form a disordered region; sequence LSKTASEASPQSLPHTPTTPTAPLTPITQGPSV. A compositionally biased stretch (low complexity) spans 306 to 320; the sequence is PHTPTTPTAPLTPIT. The segment at residues 366–456 is a DNA-binding region (fork-head); the sequence is RPPFTYASLI…PQKISGSPTL (91 aa). The segment at 511 to 578 is disordered; it reads MEHTSSNGSD…EDDPVNDDME (68 aa). A compositionally biased stretch (low complexity) spans 515 to 527; that stretch reads SSNGSDSSPGRSP. The span at 568–578 shows a compositional bias: acidic residues; sequence YEDDPVNDDME.

As to quaternary structure, dimerization is required for DNA-binding. Isoform a, but not isoform b, interacts with ctbp1. As to expression, all isoforms show similar spatial expression. Localized to the animal hemisphere of early cleavage stage embryos. At tailbud stages, expressed in regions of the brain, eye and the splanchnic mesodermal layer of the lateral plate mesoderm surrounding the gut. At stage 35, expressed within the lens of the eye, in distinct regions of the head mesenchyme and in the area anterior to the gut. In the brain the anterior-most expression is restricted to the outer region of the mesencephalon. With ongoing development, additional expression is found in the curling gut.

It localises to the nucleus. In terms of biological role, transcriptional repressor. This Xenopus laevis (African clawed frog) protein is Forkhead box protein P1.